The chain runs to 308 residues: Aspartate carbamoyltransferase catalytic subunit (308 aa).

Carbamoyl phosphate-binding residues include Arg49 and Thr50. Lys77 contacts L-aspartate. Arg99, His127, and Gln130 together coordinate carbamoyl phosphate. 2 residues coordinate L-aspartate: Arg160 and Arg211. Residues Ala252 and Pro253 each contribute to the carbamoyl phosphate site.

Belongs to the aspartate/ornithine carbamoyltransferase superfamily. ATCase family. In terms of assembly, heterododecamer (2C3:3R2) of six catalytic PyrB chains organized as two trimers (C3), and six regulatory PyrI chains organized as three dimers (R2).

It carries out the reaction carbamoyl phosphate + L-aspartate = N-carbamoyl-L-aspartate + phosphate + H(+). It participates in pyrimidine metabolism; UMP biosynthesis via de novo pathway; (S)-dihydroorotate from bicarbonate: step 2/3. Functionally, catalyzes the condensation of carbamoyl phosphate and aspartate to form carbamoyl aspartate and inorganic phosphate, the committed step in the de novo pyrimidine nucleotide biosynthesis pathway. This chain is Aspartate carbamoyltransferase catalytic subunit, found in Geobacillus kaustophilus (strain HTA426).